Reading from the N-terminus, the 1500-residue chain is Host cell factor (1500 aa).

Kelch repeat units follow at residues leucine 85–threonine 133, methionine 135–histidine 181, lysine 189–aspartate 237, asparagine 259–asparagine 307, and lysine 308–serine 373. Position 477 is a phosphoserine (serine 477). Residues leucine 517–alanine 528 show a composition bias toward polar residues. The segment at leucine 517–threonine 543 is disordered. Phosphoserine occurs at positions 958 and 966. Residues serine 1024 to glutamine 1061 form a disordered region. Low complexity predominate over residues asparagine 1036 to alanine 1047. The residue at position 1126 (threonine 1126) is a Phosphothreonine. Residues isoleucine 1161–asparagine 1185 form a disordered region. The segment covering glutamate 1166–glutamine 1178 has biased composition (basic and acidic residues). Fibronectin type-III domains are found at residues valine 1244 to proline 1341 and alanine 1346 to alanine 1457. Residues alanine 1458 to aspartate 1500 form a disordered region. The Bipartite nuclear localization signal motif lies at lysine 1470–arginine 1495. A compositionally biased stretch (polar residues) spans threonine 1477–cysteine 1488. The residue at position 1489 (serine 1489) is a Phosphoserine. Residues proline 1490–aspartate 1500 are compositionally biased toward basic residues.

Core component of several methyltransferase-containing complexes. Component of the SET1 complex, composed at least of the catalytic subunit Set1, wds/WDR5, Wdr82, Rbbp5, ash2, Cfp1/CXXC1, hcf and Dpy-30L1. Component of the MLL3/4 complex composed at least of the catalytic subunit trr, ash2, Rbbp5, Dpy-30L1, wds, hcf, ptip, Pa1, Utx, Lpt and Ncoa6. Component of the Ada2a-containing (ATAC) complex composed of at least Ada2a, Atac1, Hcf, Ada3, Gcn5, Mocs2B, Charac-14, Atac3, Atac2, NC2beta and wds. Post-translationally, proteolytic cleavage occurs between amino acids 900 and 1100 within the non-conserved central region, giving rise to two independent but tightly associated N- and C-terminal subunits.

It is found in the nucleus. In terms of biological role, may be involved in control of the cell cycle. In Drosophila melanogaster (Fruit fly), this protein is Host cell factor.